The sequence spans 478 residues: JmjC domain-containing histone demethylation protein 1 (478 aa).

The segment at 6–70 (VKCHFCKKDD…HVESFKCTLH (65 aa)) adopts a PHD-type zinc-finger fold. Positions 242-401 (SHVESFKDGI…TQLNVVEIEH (160 aa)) constitute a JmjC domain. Threonine 294 provides a ligand contact to substrate. Histidine 297 and aspartate 299 together coordinate Fe cation. Lysine 314 is a substrate binding site. Histidine 369 contributes to the Fe cation binding site.

It belongs to the JHDM1 histone demethylase family. The cofactor is Fe(2+).

It is found in the nucleus. It catalyses the reaction N(6),N(6)-dimethyl-L-lysyl(36)-[histone H3] + 2 2-oxoglutarate + 2 O2 = L-lysyl(36)-[histone H3] + 2 formaldehyde + 2 succinate + 2 CO2. Functionally, histone demethylase that specifically demethylates 'Lys-36' of histone H3, thereby playing a central role in histone code. The sequence is that of JmjC domain-containing histone demethylation protein 1 (JHD1) from Kluyveromyces lactis (strain ATCC 8585 / CBS 2359 / DSM 70799 / NBRC 1267 / NRRL Y-1140 / WM37) (Yeast).